We begin with the raw amino-acid sequence, 1976 residues long: DNA-directed RNA polymerase V subunit 1 (1976 aa).

6 residues coordinate Zn(2+): C57, C60, C68, H71, C98, and C101. D449, D451, and D453 together coordinate Mg(2+). Residues P751 to E763 form a bridging helix region. Repeat unit 1 spans residues W1215–G1216. Positions W1215–W1693 are 18 X 2 AA repeats of [WG]-[GW] repeats. Disordered stretches follow at residues E1272–P1291, D1298–L1718, and F1847–T1976. Basic and acidic residues-rich tracts occupy residues S1281–P1291 and D1298–K1307. Residues W1329–G1330 form repeat 2. Residues S1332 to T1348 show a composition bias toward polar residues. Over residues T1349–K1371 the composition is skewed to basic and acidic residues. 15 tandem repeats follow at residues W1378 to G1379, W1415 to G1416, W1430 to G1431, W1439 to G1440, W1447 to G1448, W1464 to G1465, W1498 to G1499, W1528 to G1529, W1545 to G1546, W1562 to G1563, W1596 to G1597, W1604 to G1605, W1621 to G1622, W1638 to G1639, and W1641 to G1642. The segment covering W1415–W1430 has biased composition (basic and acidic residues). Residues T1491–S1501 show a composition bias toward polar residues. The segment covering A1648–S1678 has biased composition (basic and acidic residues). Repeat copies occupy residues W1680–G1681 and G1692–W1693. The segment covering E1869 to I1878 has biased composition (polar residues). A compositionally biased stretch (low complexity) spans Q1886–T1976.

The protein belongs to the RNA polymerase beta' chain family. As to quaternary structure, component of the RNA polymerase V complex. Interacts with NRPD4, NRPD2A, and (via C-terminus) with AGO4. Interacts with SUVH2. Mostly expressed in flowers, and, to a lower extent, in leaves. Present in sperm cells.

It localises to the nucleus. The protein resides in the nucleolus. The enzyme catalyses RNA(n) + a ribonucleoside 5'-triphosphate = RNA(n+1) + diphosphate. Its function is as follows. DNA-dependent RNA polymerase catalyzes the transcription of DNA into RNA using the four ribonucleoside triphosphates as substrates. Largest and catalytic component of RNA polymerase V involved in RNA-directed DNA methylation-dependent (RdDM) silencing of endogenous repeated sequences, including transposable elements. Also required for full erasure of methylation when the RNA trigger is withdrawn. Seems also involved in the synthesis of short-interfering RNAs (siRNA). Essential component of a self-reinforcing loop coupling de novo DNA methylation to siRNA production. Involved in the maintenance of post-transcriptional RNA silencing. This is DNA-directed RNA polymerase V subunit 1 (NRPE1) from Arabidopsis thaliana (Mouse-ear cress).